We begin with the raw amino-acid sequence, 376 residues long: Branched-chain-amino-acid aminotransferase, cytosolic (376 aa).

K202 is modified (N6-(pyridoxal phosphate)lysine).

It belongs to the class-IV pyridoxal-phosphate-dependent aminotransferase family. Pyridoxal 5'-phosphate is required as a cofactor.

It localises to the cytoplasm. The enzyme catalyses L-leucine + 2-oxoglutarate = 4-methyl-2-oxopentanoate + L-glutamate. It catalyses the reaction L-isoleucine + 2-oxoglutarate = (S)-3-methyl-2-oxopentanoate + L-glutamate. The catalysed reaction is L-valine + 2-oxoglutarate = 3-methyl-2-oxobutanoate + L-glutamate. It carries out the reaction a 2-oxocarboxylate + L-methionine = 4-methylsulfanyl-2-oxobutanoate + an L-alpha-amino acid. It functions in the pathway amino-acid biosynthesis; L-isoleucine biosynthesis; L-isoleucine from 2-oxobutanoate: step 4/4. It participates in amino-acid biosynthesis; L-leucine biosynthesis; L-leucine from 3-methyl-2-oxobutanoate: step 4/4. Its pathway is amino-acid biosynthesis; L-valine biosynthesis; L-valine from pyruvate: step 4/4. The protein operates within amino-acid biosynthesis; L-methionine biosynthesis via salvage pathway; L-methionine from S-methyl-5-thio-alpha-D-ribose 1-phosphate: step 6/6. Its function is as follows. Cytoplasmic isozyme of branched-chain-amino-acid aminotransferase, which catalyzes the first reaction in the catabolism of the essential branched chain amino acids (BCAAs) leucine, isoleucine, and valine. Catalyzes the formation of methionine from 2-keto-4-methylthiobutyrate (KMTB) in the methionine salvage pathway primarily using BCAAs (leucine, isoleucine, and valine) as well as lysine and proline as the amino donors. Involved in cell cycle regulation. The protein is Branched-chain-amino-acid aminotransferase, cytosolic of Saccharomyces cerevisiae (strain ATCC 204508 / S288c) (Baker's yeast).